A 331-amino-acid polypeptide reads, in one-letter code: Tetraacyldisaccharide 4'-kinase (331 aa).

60–67 is a binding site for ATP; it reads TVGGTGKT.

Belongs to the LpxK family.

The catalysed reaction is a lipid A disaccharide + ATP = a lipid IVA + ADP + H(+). It functions in the pathway glycolipid biosynthesis; lipid IV(A) biosynthesis; lipid IV(A) from (3R)-3-hydroxytetradecanoyl-[acyl-carrier-protein] and UDP-N-acetyl-alpha-D-glucosamine: step 6/6. Transfers the gamma-phosphate of ATP to the 4'-position of a tetraacyldisaccharide 1-phosphate intermediate (termed DS-1-P) to form tetraacyldisaccharide 1,4'-bis-phosphate (lipid IVA). This Pseudomonas syringae pv. syringae (strain B728a) protein is Tetraacyldisaccharide 4'-kinase.